Reading from the N-terminus, the 355-residue chain is tRNA uridine(34) hydroxylase (355 aa).

One can recognise a Rhodanese domain in the interval 146–240; it reads KDPDALFVDM…YVRTAKKKDL (95 aa). Cysteine 200 acts as the Cysteine persulfide intermediate in catalysis.

The protein belongs to the TrhO family.

It carries out the reaction uridine(34) in tRNA + AH2 + O2 = 5-hydroxyuridine(34) in tRNA + A + H2O. Catalyzes oxygen-dependent 5-hydroxyuridine (ho5U) modification at position 34 in tRNAs. The sequence is that of tRNA uridine(34) hydroxylase from Hamiltonella defensa subsp. Acyrthosiphon pisum (strain 5AT).